The primary structure comprises 2617 residues: Ubiquitin carboxyl-terminal hydrolase 24 (2617 aa).

One can recognise a UBA domain in the interval 3 to 44 (SEEEQHMTTLLCMGFSDPATIRKALRLAKNDINEAVALLTNE). The interval 45–99 (RPGLDYGGYEPMDSGGPSPGPGGGPRGDSGSDGSGPSRGGSTGGGGGFDPPPAYH) is disordered. Phosphoserine occurs at positions 62 and 85. Positions 65-92 (PGGGPRGDSGSDGSGPSRGGSTGGGGGF) are enriched in gly residues. Position 939 is a phosphotyrosine (tyrosine 939). 2 disordered regions span residues 1030–1056 (KTSG…SGAF) and 1127–1148 (LLSE…QQHQ). 2 stretches are compositionally biased toward low complexity: residues 1031-1056 (TSGS…SGAF) and 1128-1148 (LSET…QQHQ). Residues serine 1138 and serine 1282 each carry the phosphoserine modification. Residues 1686–2039 (VGLRNGGATC…NAYMLFYQRV (354 aa)) enclose the USP domain. Cysteine 1695 acts as the Nucleophile in catalysis. Residues 1920–1942 (QDSSSEVGENGRNMDQGGGGSPR) are disordered. Serine 1940 carries the phosphoserine modification. The active-site Proton acceptor is the histidine 1967. Residues serine 2044, serine 2074, and serine 2558 each carry the phosphoserine modification. A disordered region spans residues 2060–2087 (AEDLSLSAPSSPEISPQSSPRPHRPNND). Residues 2066–2079 (SAPSSPEISPQSSP) show a composition bias toward low complexity. Phosphothreonine is present on threonine 2562. Residues 2572–2617 (EKEQSGSSNGSESSPANENGERHLQQGSESPMMIGELRSDLDDVDP) are disordered. A compositionally biased stretch (low complexity) spans 2576 to 2589 (SGSSNGSESSPANE). Serine 2601 is subject to Phosphoserine. Residues 2608-2617 (LRSDLDDVDP) show a composition bias toward basic and acidic residues.

This sequence belongs to the peptidase C19 family.

The enzyme catalyses Thiol-dependent hydrolysis of ester, thioester, amide, peptide and isopeptide bonds formed by the C-terminal Gly of ubiquitin (a 76-residue protein attached to proteins as an intracellular targeting signal).. In terms of biological role, protease that can remove conjugated ubiquitin from target proteins and polyubiquitin chains. Deubiquitinates DDB2, preventing its proteasomal degradation. The polypeptide is Ubiquitin carboxyl-terminal hydrolase 24 (Usp24) (Mus musculus (Mouse)).